Reading from the N-terminus, the 205-residue chain is MTKIVRSKYKASRRLGVSLWGDSKDAFNTRNYRPGQHGQNTMIKTSDYGLHLKAKQRLKCHYGRVTEKQFRNIFALAQKMKGNTGENFIGLLESRLDTVVYRMNIAPTIFAARQLVSHGHIKLNGKKADIASIRLKEGDVIEVKESVKQIPLIQESVSKQAQTTPGYLSFDVPSLTGKYLRVPALSDVPYPFEAEVHLVIELYSR.

The S4 RNA-binding domain maps to 94 to 157 (SRLDTVVYRM…KQIPLIQESV (64 aa)).

The protein belongs to the universal ribosomal protein uS4 family. As to quaternary structure, part of the 30S ribosomal subunit. Contacts protein S5. The interaction surface between S4 and S5 is involved in control of translational fidelity.

One of the primary rRNA binding proteins, it binds directly to 16S rRNA where it nucleates assembly of the body of the 30S subunit. Functionally, with S5 and S12 plays an important role in translational accuracy. This chain is Small ribosomal subunit protein uS4, found in Rickettsia felis (strain ATCC VR-1525 / URRWXCal2) (Rickettsia azadi).